Here is a 252-residue protein sequence, read N- to C-terminus: Adenosylcobinamide-GDP ribazoletransferase (252 aa).

7 helical membrane passes run 4–24 (LFKG…PYVE), 38–58 (PIIG…INYL), 60–80 (ISIV…TGML), 113–133 (FSVI…HSFL), 141–161 (ILMF…ITII), 190–210 (LVCI…LLIV), and 232–252 (VAGF…CLFT).

Belongs to the CobS family. Mg(2+) serves as cofactor.

The protein resides in the cell membrane. The catalysed reaction is alpha-ribazole + adenosylcob(III)inamide-GDP = adenosylcob(III)alamin + GMP + H(+). It carries out the reaction alpha-ribazole 5'-phosphate + adenosylcob(III)inamide-GDP = adenosylcob(III)alamin 5'-phosphate + GMP + H(+). The protein operates within cofactor biosynthesis; adenosylcobalamin biosynthesis; adenosylcobalamin from cob(II)yrinate a,c-diamide: step 7/7. Its function is as follows. Joins adenosylcobinamide-GDP and alpha-ribazole to generate adenosylcobalamin (Ado-cobalamin). Also synthesizes adenosylcobalamin 5'-phosphate from adenosylcobinamide-GDP and alpha-ribazole 5'-phosphate. This Clostridium botulinum (strain Alaska E43 / Type E3) protein is Adenosylcobinamide-GDP ribazoletransferase.